Reading from the N-terminus, the 743-residue chain is Neutral ceramidase (743 aa).

Over 1–14 (MASKSRRLSGLEIS) the chain is Cytoplasmic. The chain crosses the membrane as a helical; Signal-anchor for type II membrane protein span at residues 15–35 (LIVLFLLMTAVSVALITVLAL). At 36 to 743 (KQESDKKEEV…FKVARSFYYF (708 aa)) the chain is on the lumenal side. The disordered stretch occupies residues 40–60 (DKKEEVTPEEPSPSVTPPEKP). The span at 49–59 (EPSPSVTPPEK) shows a compositional bias: pro residues. Zn(2+)-binding residues include His151 and His260. Asn265 carries N-linked (GlcNAc...) asparagine glycosylation. Catalysis depends on Ser312, which acts as the Nucleophile. Intrachain disulfides connect Cys320–Cys334 and Cys327–Cys342. 4 N-linked (GlcNAc...) asparagine glycosylation sites follow: Asn331, Asn389, Asn398, and Asn451. An intrachain disulfide couples Cys406 to Cys456. Residues Glu498 and Tyr538 each contribute to the Zn(2+) site. N-linked (GlcNAc...) asparagine glycosylation is present at Asn661. Asp672, Ser674, and Thr677 together coordinate Ca(2+). N-linked (GlcNAc...) asparagine glycosylation occurs at Asn720.

The protein belongs to the neutral ceramidase family. Requires Zn(2+) as cofactor. In terms of processing, N-glycosylated. O-glycosylated. As to expression, detected in intestine (at protein level).

The protein localises to the cell membrane. It localises to the membrane raft. It is found in the membrane. Its subcellular location is the caveola. The protein resides in the golgi apparatus membrane. The protein localises to the mitochondrion. It localises to the secreted. It is found in the extracellular exosome. It carries out the reaction an N-acylsphing-4-enine + H2O = sphing-4-enine + a fatty acid. The catalysed reaction is N-dodecanoylsphing-4-enine + H2O = dodecanoate + sphing-4-enine. It functions in the pathway lipid metabolism; sphingolipid metabolism. Functionally, plasma membrane ceramidase that hydrolyzes sphingolipid ceramides into sphingosine and free fatty acids at neutral pH. Ceramides, sphingosine, and its phosphorylated form sphingosine-1-phosphate are bioactive lipids that mediate cellular signaling pathways regulating several biological processes including cell proliferation, apoptosis and differentiation. Also catalyzes the reverse reaction allowing the synthesis of ceramides from fatty acids and sphingosine. Together with sphingomyelinase, participates in the production of sphingosine and sphingosine-1-phosphate from the degradation of sphingomyelin, a sphingolipid enriched in the plasma membrane of cells. Also participates in the hydrolysis of ceramides from the extracellular milieu allowing the production of sphingosine-1-phosphate inside and outside cells. The protein is Neutral ceramidase (asah2) of Danio rerio (Zebrafish).